A 505-amino-acid chain; its full sequence is Cytochrome P450 76A2 (505 aa).

Cysteine 448 provides a ligand contact to heme.

This sequence belongs to the cytochrome P450 family. Requires heme as cofactor.

The chain is Cytochrome P450 76A2 (CYP76A2) from Solanum melongena (Eggplant).